The primary structure comprises 103 residues: Sec-independent protein translocase protein TatA (103 aa).

A helical transmembrane segment spans residues 1 to 21; sequence MGNIFSPTHLIVILLIIIVLF. The disordered stretch occupies residues 77 to 103; it reads KRATTRVKGSSSSRKGKTSVVKKQRVK. Basic residues predominate over residues 90–103; that stretch reads RKGKTSVVKKQRVK.

This sequence belongs to the TatA/E family. As to quaternary structure, the Tat system comprises two distinct complexes: a TatABC complex, containing multiple copies of TatA, TatB and TatC subunits, and a separate TatA complex, containing only TatA subunits. Substrates initially bind to the TatABC complex, which probably triggers association of the separate TatA complex to form the active translocon.

It is found in the cell inner membrane. Part of the twin-arginine translocation (Tat) system that transports large folded proteins containing a characteristic twin-arginine motif in their signal peptide across membranes. TatA could form the protein-conducting channel of the Tat system. The protein is Sec-independent protein translocase protein TatA of Bartonella henselae (strain ATCC 49882 / DSM 28221 / CCUG 30454 / Houston 1) (Rochalimaea henselae).